The following is a 1131-amino-acid chain: cGMP-specific 3',5'-cyclic phosphodiesterase (1131 aa).

2 disordered regions span residues 1-26 (MTDV…SAAT) and 42-150 (GVAP…SQQD). Residues 42–63 (GVAPGAVPGPGSAAIPASSSSG) are compositionally biased toward low complexity. Polar residues predominate over residues 75-86 (SNNNRPAATNRS). Low complexity predominate over residues 110 to 136 (SSSTPSQSPSPSQSPSQASIQTQTSQQ). GAF domains are found at residues 255–412 (DIDV…GIGI) and 444–625 (NLEC…GLGI). The PDEase domain maps to 655–978 (SQDQTEKLTQ…RNWQDLAEKV (324 aa)). His731 serves as the catalytic Proton donor. Positions 735, 771, 772, and 882 each coordinate a divalent metal cation. 2 disordered regions span residues 1019–1048 (QQSQ…TGAL) and 1078–1131 (SHVS…CALL). Composition is skewed to basic and acidic residues over residues 1024–1035 (GSEDSHTPEHQR) and 1078–1088 (SHVSEDMDDKS). Low complexity predominate over residues 1097 to 1117 (ASGSMGRMSASSSTSSAGGQM). Over residues 1121–1131 (SKKRSKLCALL) the composition is skewed to basic residues. Cys1128 carries the post-translational modification Cysteine methyl ester. A lipid anchor (S-farnesyl cysteine) is attached at Cys1128. Positions 1129-1131 (ALL) are cleaved as a propeptide — removed in mature form.

It belongs to the cyclic nucleotide phosphodiesterase family. Interacts with PrBP. A divalent metal cation serves as cofactor.

It is found in the cell membrane. The catalysed reaction is 3',5'-cyclic GMP + H2O = GMP + H(+). Has a role regulating cGMP transport in Malpighian tubule principal cells. In Drosophila erecta (Fruit fly), this protein is cGMP-specific 3',5'-cyclic phosphodiesterase.